The chain runs to 326 residues: Probable sodium/potassium-transporting ATPase subunit beta-3 (326 aa).

Over 1–59 (MMSSRTRKIYLFVFMFISTSLQLMNGEAKAEPETFRQFLYNKQKGTVLGRTGTSWCQIT) the chain is Cytoplasmic. The chain crosses the membrane as a helical; Signal-anchor for type II membrane protein span at residues 60–80 (VFYIIFYIFLSAFFIGCLAIF). The Lumenal portion of the chain corresponds to 81–326 (LKTLDPKVPR…DKKPVAAPAA (246 aa)). Asn-144 and Asn-147 each carry an N-linked (GlcNAc...) asparagine glycan. Cysteines 234 and 291 form a disulfide.

Belongs to the X(+)/potassium ATPases subunit beta family. As to quaternary structure, the sodium/potassium-transporting ATPase is composed of a catalytic alpha subunit, an auxiliary non-catalytic beta subunit and an additional regulatory subunit.

Its subcellular location is the cell membrane. This is the non-catalytic component of the active enzyme, which catalyzes the hydrolysis of ATP coupled with the exchange of Na(+) and K(+) ions across the plasma membrane. The beta subunit regulates, through assembly of alpha/beta heterodimers, the number of sodium pumps transported to the plasma membrane. Implicated in genomic response to various soil bacteria that affects fitness, lifespan and brood size. This is Probable sodium/potassium-transporting ATPase subunit beta-3 (nkb-3) from Caenorhabditis briggsae.